The chain runs to 68 residues: Neuronal regeneration-related protein (68 aa).

In terms of assembly, interacts with FLNA. Interacts with the latency-associated peptides (LAP) of TGFB1 and TGFB2; the interaction results in a decrease in TGFB autoinduction. Post-translationally, phosphorylated on Ser-59. Phosphorylation decreases stability and activity.

It is found in the cytoplasm. Functionally, may have roles in neural function. Ectopic expression promotes axonal regeneration. Also augments motility of gliomas. May also have roles in cellular differentiation. Induces differentiation of fibroblast into myofibroblast and myofibroblast ameboid migration. Increases retinoic-acid regulation of lipid-droplet biogenesis. Down-regulates the expression of TGFB1 and TGFB2 but not of TGFB3. May play a role in the regulation of alveolar generation. In Rattus norvegicus (Rat), this protein is Neuronal regeneration-related protein (Nrep).